The chain runs to 697 residues: Portal protein (697 aa).

The disordered stretch occupies residues 633-697 (MSREAAGGVP…RRAGGPYGFH (65 aa)). Residues 664-689 (ITADEERRGPERVGRFRNGGPDDPRR) show a composition bias toward basic and acidic residues.

This sequence belongs to the herpesviridae portal protein family. In terms of assembly, homododecamerizes. Interacts with terminase subunits TRM1 and TRM3.

Its subcellular location is the virion. It localises to the host nucleus. Functionally, forms a portal in the viral capsid through which viral DNA is translocated during DNA packaging. Assembles as a dodecamer at a single fivefold axe of the T=16 icosahedric capsid. Binds to the molecular motor that translocates the viral DNA, termed terminase. This is Portal protein (UL104) from Homo sapiens (Human).